The sequence spans 165 residues: Phosphopantetheine adenylyltransferase (165 aa).

S10 provides a ligand contact to substrate. Residues 10 to 11 (SF) and H18 contribute to the ATP site. Residues K42, T79, and R93 each coordinate substrate. Residues 94–96 (GLR), E104, and 129–135 (VRPITAT) each bind ATP.

The protein belongs to the bacterial CoaD family. Homohexamer. The cofactor is Mg(2+).

The protein resides in the cytoplasm. The enzyme catalyses (R)-4'-phosphopantetheine + ATP + H(+) = 3'-dephospho-CoA + diphosphate. It participates in cofactor biosynthesis; coenzyme A biosynthesis; CoA from (R)-pantothenate: step 4/5. Functionally, reversibly transfers an adenylyl group from ATP to 4'-phosphopantetheine, yielding dephospho-CoA (dPCoA) and pyrophosphate. The sequence is that of Phosphopantetheine adenylyltransferase from Rhodopseudomonas palustris (strain BisB5).